We begin with the raw amino-acid sequence, 648 residues long: Threonine--tRNA ligase (648 aa).

One can recognise a TGS domain in the interval 1–63 (MSQISLTFPD…AASGRIAINT (63 aa)). Residues 247–544 (DHRKLGREME…LIENYSGKLP (298 aa)) form a catalytic region. Zn(2+) contacts are provided by Cys-344, His-395, and His-521.

Belongs to the class-II aminoacyl-tRNA synthetase family. As to quaternary structure, homodimer. Zn(2+) serves as cofactor.

It is found in the cytoplasm. The catalysed reaction is tRNA(Thr) + L-threonine + ATP = L-threonyl-tRNA(Thr) + AMP + diphosphate + H(+). In terms of biological role, catalyzes the attachment of threonine to tRNA(Thr) in a two-step reaction: L-threonine is first activated by ATP to form Thr-AMP and then transferred to the acceptor end of tRNA(Thr). Also edits incorrectly charged L-seryl-tRNA(Thr). The sequence is that of Threonine--tRNA ligase from Paracoccus denitrificans (strain Pd 1222).